The sequence spans 493 residues: Glutamyl-tRNA(Gln) amidotransferase subunit A (493 aa).

Residues lysine 79 and serine 159 each act as charge relay system in the active site. Serine 183 (acyl-ester intermediate) is an active-site residue.

This sequence belongs to the amidase family. GatA subfamily. As to quaternary structure, heterotrimer of A, B and C subunits.

The catalysed reaction is L-glutamyl-tRNA(Gln) + L-glutamine + ATP + H2O = L-glutaminyl-tRNA(Gln) + L-glutamate + ADP + phosphate + H(+). Allows the formation of correctly charged Gln-tRNA(Gln) through the transamidation of misacylated Glu-tRNA(Gln) in organisms which lack glutaminyl-tRNA synthetase. The reaction takes place in the presence of glutamine and ATP through an activated gamma-phospho-Glu-tRNA(Gln). The chain is Glutamyl-tRNA(Gln) amidotransferase subunit A from Rhizobium meliloti (strain 1021) (Ensifer meliloti).